We begin with the raw amino-acid sequence, 78 residues long: Kassorin-S (78 aa).

Residues Met-1 to Ala-22 form the signal peptide. The propeptide occupies Asn-23–Arg-64. Positions Ser-24–Glu-60 are disordered. Residues Lys-25 to Glu-60 are compositionally biased toward basic and acidic residues. A Leucine amide modification is found at Leu-77.

Belongs to the frog skin active peptide (FSAP) family. Brevinin subfamily. Expressed by the skin glands.

The protein localises to the secreted. Functionally, antimicrobial peptide. Active against the Gram-positive bacterium S.aureus (MIC=30 uM) and the yeast C.albicans (MIC=100 uM). Not effective against the Gram-negative bacterium E.coli at concentrations up to 250 uM. Lacks ability to induce contraction of smooth muscle in isolated guinea pig urinary bladder. Elicits histamine release from rat peritoneal mast cells. The chain is Kassorin-S from Kassina senegalensis (Senegal running frog).